Consider the following 561-residue polypeptide: Bifunctional NAD(P)H-hydrate repair enzyme (561 aa).

The interval 1–241 (MLSRISERCT…WMIAAERMDA (241 aa)) is NAD(P)H-hydrate epimerase. Positions 29 to 235 (LRDAEPAAAA…SLGLEEWMIA (207 aa)) constitute a YjeF N-terminal domain. An NADPHX 1; for epimerase activity region spans residues 77-81 (NNGGD). K(+) contacts are provided by Asn78 and Asp145. An NADPHX 1; for epimerase activity region spans residues 149 to 155 (GTGISGP). 2 residues coordinate (6S)-NADPHX: Tyr160 and Asp178. Ser181 is a binding site for K(+). In terms of domain architecture, YjeF C-terminal spans 249–548 (LGDVYGYFST…PRIPFIVNAS (300 aa)). The segment at 249-561 (LGDVYGYFST…SATQQRPSGL (313 aa)) is ADP-dependent (S)-NAD(P)H-hydrate dehydratase. Gly351 lines the (6S)-NADPHX pocket. An NADPHX 2; for dehydratase activity region spans residues 417–423 (HPGEAAR). ADP contacts are provided by residues 454–458 (KGPGT) and 475–484 (NAGMASGGMG). Asp485 is a binding site for (6S)-NADPHX.

It in the N-terminal section; belongs to the NnrE/AIBP family. This sequence in the C-terminal section; belongs to the NnrD/CARKD family. K(+) is required as a cofactor.

It carries out the reaction (6S)-NADHX + ADP = AMP + phosphate + NADH + H(+). The enzyme catalyses (6S)-NADPHX + ADP = AMP + phosphate + NADPH + H(+). The catalysed reaction is (6R)-NADHX = (6S)-NADHX. It catalyses the reaction (6R)-NADPHX = (6S)-NADPHX. Bifunctional enzyme that catalyzes the epimerization of the S- and R-forms of NAD(P)HX and the dehydration of the S-form of NAD(P)HX at the expense of ADP, which is converted to AMP. This allows the repair of both epimers of NAD(P)HX, a damaged form of NAD(P)H that is a result of enzymatic or heat-dependent hydration. The chain is Bifunctional NAD(P)H-hydrate repair enzyme from Leishmania braziliensis.